Consider the following 459-residue polypeptide: GTPase Der (459 aa).

EngA-type G domains lie at 3–169 and 183–358; these read PLVA…PPKE and IRLA…DQFR. Residues 9–16, 56–60, 119–122, 189–196, 236–240, and 301–304 contribute to the GTP site; these read GRPNVGKS, DTGGF, NKLD, DTAGI, and NKWD. Positions 359–442 constitute a KH-like domain; the sequence is FRAPTPQLNR…PIRLIFKGRP (84 aa).

It belongs to the TRAFAC class TrmE-Era-EngA-EngB-Septin-like GTPase superfamily. EngA (Der) GTPase family. In terms of assembly, associates with the 50S ribosomal subunit.

In terms of biological role, GTPase that plays an essential role in the late steps of ribosome biogenesis. This Myxococcus xanthus (strain DK1622) protein is GTPase Der.